The chain runs to 476 residues: 3-isopropylmalate dehydratase large subunit (476 aa).

3 residues coordinate [4Fe-4S] cluster: Cys357, Cys417, and Cys420.

This sequence belongs to the aconitase/IPM isomerase family. LeuC type 1 subfamily. Heterodimer of LeuC and LeuD. [4Fe-4S] cluster serves as cofactor.

The enzyme catalyses (2R,3S)-3-isopropylmalate = (2S)-2-isopropylmalate. It participates in amino-acid biosynthesis; L-leucine biosynthesis; L-leucine from 3-methyl-2-oxobutanoate: step 2/4. Catalyzes the isomerization between 2-isopropylmalate and 3-isopropylmalate, via the formation of 2-isopropylmaleate. This Mycolicibacterium paratuberculosis (strain ATCC BAA-968 / K-10) (Mycobacterium paratuberculosis) protein is 3-isopropylmalate dehydratase large subunit.